The chain runs to 77 residues: Dermatoxin-S1 (77 aa).

The first 22 residues, 1-22 (MAFLKKSLFLILFLGLVPLSFC), serve as a signal peptide directing secretion. Positions 23-44 (ENDKREGENEEEQDDDQSEEKR) are excised as a propeptide. Position 76 is a glutamine amide (glutamine 76).

Expressed by the skin glands.

Its subcellular location is the secreted. It localises to the target cell membrane. In terms of biological role, antimicrobial peptide with potent activity against Gram-positive bacteria B.megaterium, C.glutamicum and S.aureus and mollicutes A.laidlawii and S.melliferum. Less active against Gram-negative bacteria B.cepacia, P.aeruginosa, S.typhimurium and S.meliloti. Probably acts by disturbing membrane functions with its amphipathic structure. The chain is Dermatoxin-S1 from Phyllomedusa sauvagei (Sauvage's leaf frog).